A 624-amino-acid polypeptide reads, in one-letter code: Kelch-like ECH-associated protein 1 (624 aa).

An S-(2-succinyl)cysteine modification is found at Cys38. Residues 77 to 149 (CDVTLQVKYQ…AYTASISMGE (73 aa)) form the BTB domain. Arg135 is covalently cross-linked (N5-[4-(S-L-cysteinyl)-5-methyl-1H-imidazol-2-yl]-L-ornithine (Arg-Cys) (interchain with C-151 in KEAP1)). S-(2-succinyl)cysteine occurs at positions 151 and 241. Cys151 bears the S-(2,3-dicarboxypropyl)cysteine; alternate mark. S-nitrosocysteine; alternate is present on Cys151. Cys151 participates in a covalent cross-link: N5-[4-(S-L-cysteinyl)-5-methyl-1H-imidazol-2-yl]-L-ornithine (Cys-Arg) (interchain with R-135 in KEAP1). The BACK domain maps to 184-286 (AIGIANFAEQ…TPNFLQMQLQ (103 aa)). Residues Cys257 and Cys273 each carry the S-(2,3-dicarboxypropyl)cysteine modification. S-(2-succinyl)cysteine occurs at positions 288 and 319. Residue Cys288 is modified to S-(2,3-dicarboxypropyl)cysteine; alternate. Kelch repeat units follow at residues 327-372 (LIYT…VVGG), 373-423 (LLYA…VIDG), 424-470 (HIYA…VLNR), 471-517 (LLYA…VLHN), 518-564 (CIYA…VHQG), and 565-611 (RIYV…VTME). The residue at position 434 (Cys434) is an S-cGMP-cysteine. Cys613 carries the post-translational modification S-(2-succinyl)cysteine.

Belongs to the KEAP1 family. Component of the BCR(KEAP1) E3 ubiquitin ligase complex, at least composed of 2 molecules of CUL3, 2 molecules of KEAP1, and RBX1. Interacts with NFE2L2/NRF2; the interaction is direct. Forms a ternary complex with NFE2L2/NRF2 and PGAM5. Interacts with (phosphorylated) SQSTM1/p62; the interaction is direct and inactivates the BCR(KEAP1) complex by sequestering it in inclusion bodies, promoting its degradation. Interacts with NFE2L1. Interacts with BPTF and PTMA. Interacts with MAP1LC3B. Interacts indirectly with ENC1. Interacts with SESN1 and SESN2. Interacts with HSP90AA1 and HSP90AB1. Interacts with PGCKA1; this interaction prevents the ubiquitination of KEAP1 by TRIM25, thus protecting KEAP1 from degradation. Non-enzymatic covalent modifications of reactive cysteines by electrophile metabolites inactivate the BCR(KEAP1) complex. Accumulation of fumarate promotes the formation of cysteine S-succination (S-(2-succinyl)cysteine), leading to inactivate the BCR(KEAP1) complex and promote NFE2L2/NRF2 nuclear accumulation and activation. Nitric oxide-dependent 8-Nitro-cGMP formation promotes cysteine guanylation (S-cGMP-cysteine), leading to NFE2L2/NRF2 nuclear accumulation and activation. Itaconate, an anti-inflammatory metabolite generated in response to lipopolysaccharide, alkylates cysteines, activating NFE2L2/NRF2. Methylglyoxal, a reactive metabolite that accumulates when the glycolytic enzyme PGK1 is inhibited, promotes formation of a methylimidazole cross-link between proximal Cys-151 and Arg-135 on another KEAP1 molecule, resulting in an inactive dimer that inactivates the BCR(KEAP1) complex. In terms of processing, degraded via a proteasomal-independent process during selective autophagy: interaction with phosphorylated SQSTM1/p62 sequesters KEAP1 in inclusion bodies, leading to its degradation. Post-translationally, auto-ubiquitinated by the BCR(KEAP1) complex. Quinone-induced oxidative stress, but not sulforaphane, increases its ubiquitination. Ubiquitination and subsequent degradation is most pronounced following prolonged exposure of cells to oxidative stress, particularly in glutathione-deficient cells that are highly susceptible to oxidative stress. Deubiquitinated by USP25; leading to stabilization. Ubiquitinated by TRIM25; leading to degradation upon ER stress.

The protein resides in the cytoplasm. It localises to the nucleus. Its pathway is protein modification; protein ubiquitination. Ubiquitin ligase activity of the BCR(KEAP1) complex is inhibited by oxidative stress and electrophile metabolites such as sulforaphane. Electrophile metabolites react with reactive cysteine residues in KEAP1 and trigger non-enzymatic covalent modifications of these cysteine residues, leading to inactivate the ubiquitin ligase activity of the BCR(KEAP1) complex. Selective autophagy also inactivates the BCR(KEAP1) complex via interaction between KEAP1 and SQSTM1/p62, which sequesters the complex in inclusion bodies and promotes its degradation. In terms of biological role, substrate-specific adapter of a BCR (BTB-CUL3-RBX1) E3 ubiquitin ligase complex that regulates the response to oxidative stress by targeting NFE2L2/NRF2 for ubiquitination. KEAP1 acts as a key sensor of oxidative and electrophilic stress: in normal conditions, the BCR(KEAP1) complex mediates ubiquitination and degradation of NFE2L2/NRF2, a transcription factor regulating expression of many cytoprotective genes. In response to oxidative stress, different electrophile metabolites trigger non-enzymatic covalent modifications of highly reactive cysteine residues in KEAP1, leading to inactivate the ubiquitin ligase activity of the BCR(KEAP1) complex, promoting NFE2L2/NRF2 nuclear accumulation and expression of phase II detoxifying enzymes. In response to selective autophagy, KEAP1 is sequestered in inclusion bodies following its interaction with SQSTM1/p62, leading to inactivation of the BCR(KEAP1) complex and activation of NFE2L2/NRF2. The BCR(KEAP1) complex also mediates ubiquitination of SQSTM1/p62, increasing SQSTM1/p62 sequestering activity and degradation. The BCR(KEAP1) complex also targets BPTF and PGAM5 for ubiquitination and degradation by the proteasome. The sequence is that of Kelch-like ECH-associated protein 1 from Pongo abelii (Sumatran orangutan).